The primary structure comprises 331 residues: Serpentine receptor class alpha-1 (331 aa).

The next 7 membrane-spanning stretches (helical) occupy residues 22-42 (FAVF…VIAV), 57-77 (IILV…AIIS), 104-124 (YTEV…GILI), 143-163 (VGII…QIII), 189-209 (FLFI…AVMF), 238-258 (ICVV…GVLI), and 274-294 (LITW…ILIF).

This sequence belongs to the nematode receptor-like protein sra family.

It localises to the membrane. This chain is Serpentine receptor class alpha-1 (sra-1), found in Caenorhabditis elegans.